The primary structure comprises 582 residues: Zinc finger protein somi-1 (582 aa).

Disordered stretches follow at residues 179-251 (LRPE…NNTD) and 352-377 (SAEPMKRHRVEAHEKQSPKKKVKKEQ). Positions 188–226 (TQKSTNGVHRSTSNSSAETLRNNSVSAATVSPSDDNSLN) are enriched in polar residues. Positions 227 to 244 (SPALTSSGSAGSGTPPLG) are enriched in low complexity. Residues 352–368 (SAEPMKRHRVEAHEKQS) show a composition bias toward basic and acidic residues. The C2H2-type; Degenerate zinc-finger motif lies at 454–477 (YICEDCDFVTVYKGNMKRHLNTCH). The disordered stretch occupies residues 513-582 (AHKANSSRGR…PPPPPPPMLL (70 aa)). The span at 551 to 570 (LLESLASSSSSMGGYSNGNN) shows a compositional bias: low complexity. Residues 572 to 582 (QPPPPPPPMLL) are compositionally biased toward pro residues.

As to quaternary structure, may interact with swsn-9; the interaction promotes hypodermal differentiation. As to expression, expressed in hypodermal seam cells, the somatic gonad and vulval precursor cells, body wall muscle and head neurons.

It is found in the nucleus. In terms of biological role, DNA-binding protein which binds to the promoters of let-60, lin-14 and lin-28, possibly to regulate genes involved in hypodermal and vulval development. Together with miRNAs mir-84 and let-7 may direct terminal differentiation of the seam cells, exit from the molting cycle, and vulva formation. Does not regulate the expression of mir-84. May promote hypodermal differentiation in association with swsn-9, a component of SWI/SNF chromatin remodeling complexes. This Caenorhabditis elegans protein is Zinc finger protein somi-1.